Reading from the N-terminus, the 373-residue chain is UPF0725 protein At1g23950 (373 aa).

Position 2 is an N-acetylthreonine (threonine 2).

This sequence belongs to the UPF0725 (EMB2204) family.

This is UPF0725 protein At1g23950 from Arabidopsis thaliana (Mouse-ear cress).